Reading from the N-terminus, the 549-residue chain is Probable protein kinase UbiB (549 aa).

Residues 123–501 (DFNEIPLASA…QQQAHKSNYL (379 aa)) enclose the Protein kinase domain. Residues 129–137 (LASASISQV) and lysine 152 contribute to the ATP site. Aspartate 287 functions as the Proton acceptor in the catalytic mechanism. The next 2 helical transmembrane spans lie at 496 to 516 (HKSN…TLLI) and 520 to 540 (ATLW…FVGW).

This sequence belongs to the ABC1 family. UbiB subfamily.

It localises to the cell inner membrane. The protein operates within cofactor biosynthesis; ubiquinone biosynthesis [regulation]. In terms of biological role, is probably a protein kinase regulator of UbiI activity which is involved in aerobic coenzyme Q (ubiquinone) biosynthesis. This chain is Probable protein kinase UbiB, found in Shewanella baltica (strain OS223).